The chain runs to 205 residues: Lymphotoxin-alpha (205 aa).

A signal peptide spans 1-34; that stretch reads MTPPERLFLSRVRGTPLHLLLLGLLLVLLPGAQG. O-linked (GalNAc...) threonine glycosylation is present at T41. Residues 63 to 205 enclose the THD domain; it reads PAAHLIGDPS…STVFFGAFAL (143 aa). N-linked (GlcNAc...) asparagine glycosylation occurs at N96.

The protein belongs to the tumor necrosis factor family. As to quaternary structure, homotrimer, and heterotrimer of either two LTB and one LTA subunits or (less prevalent) two LTA and one LTB subunits. Interacts with TNFRSF14.

The protein resides in the secreted. Its subcellular location is the membrane. In terms of biological role, cytokine that in its homotrimeric form binds to TNFRSF1A/TNFR1, TNFRSF1B/TNFBR and TNFRSF14/HVEM. In its heterotrimeric form with LTB binds to TNFRSF3/LTBR. Lymphotoxin is produced by lymphocytes and is cytotoxic for a wide range of tumor cells in vitro and in vivo. The protein is Lymphotoxin-alpha (LTA) of Macaca mulatta (Rhesus macaque).